The chain runs to 626 residues: 5'-AMP-activated protein kinase catalytic subunit alpha-2 (626 aa).

Residues 1-24 (MFSHQDRDRDRKEDGGGDGTEMKS) show a composition bias toward basic and acidic residues. The interval 1–77 (MFSHQDRDRD…GETSTKQQQE (77 aa)) is disordered. Positions 38 to 49 (NLSRKLSAKSRK) are enriched in basic residues. Polar residues predominate over residues 58-77 (DNSSKMSSPGGETSTKQQQE). In terms of domain architecture, Protein kinase spans 87–339 (YILKETLGVG…IKDVIAHEWF (253 aa)). Residues 93–101 (LGVGTFGKV) and Lys116 each bind ATP. The active-site Proton acceptor is Asp210. At Thr243 the chain carries Phosphothreonine; by par-4. The disordered stretch occupies residues 541–568 (SGSASASSSRHASMSMPQKPAGIRGTRT). Low complexity predominate over residues 542 to 555 (GSASASSSRHASMS).

The protein belongs to the protein kinase superfamily. CAMK Ser/Thr protein kinase family. SNF1 subfamily. As to quaternary structure, tetramer, composed of 2 regulatory (R) and 2 catalytic (C) subunits. In the presence of cAMP it dissociates into 2 active monomeric C subunits and an R dimer that binds four cAMP molecules. Phosphorylated on Thr-243 in response to oxidative stress and during dauer development. Phosphorylation at Thr-243 is increased in response to sodium azide or the AMP analog AICAR (5-amino-1-(5-phospho-beta-D-ribosyl)imidazole-4-carboxamide). In terms of tissue distribution, expressed in the pharynx, the ventral cord, neurons including the hermaphrodite-specific neuron, body wall muscles, the vulva, the excretory canal, and weakly in the intestine.

The enzyme catalyses L-seryl-[protein] + ATP = O-phospho-L-seryl-[protein] + ADP + H(+). It carries out the reaction L-threonyl-[protein] + ATP = O-phospho-L-threonyl-[protein] + ADP + H(+). With respect to regulation, activated by phosphorylation. In terms of biological role, acts as a sensor that couples lifespan to information about energy levels and insulin-like signals. Role in motility and response to oxidative stress. Involved in the establishment of germline stem cell (GSC) quiescence during dauer development. Plays a role in axon regrowth after axotomy in PLM neurons. Plays a role in the maintenance of glycogen stores which are necessary for resistance to hyperosmotic stress. Plays a role in the regulation of flp-7 secretion from ASI neurons. Keeps the CREB-regulated transcription coactivator 1 homolog crtc-1 inactive which in turn inhibits flp-7 secretion. Following serotonin signaling, derepresses crtc-1 which stimulates flp-7 secretion and subsequent body fat loss. In Caenorhabditis elegans, this protein is 5'-AMP-activated protein kinase catalytic subunit alpha-2.